The sequence spans 195 residues: Der GTPase-activating protein YihI (195 aa).

Residues 1–81 (MSRTKKTRRI…KAVVKEVKDP (81 aa)) are disordered. 3 stretches are compositionally biased toward basic and acidic residues: residues 9 to 23 (RITD…DKPK), 38 to 49 (TRYELDAQAREE), and 66 to 81 (DPAE…VKDP).

Belongs to the YihI family. In terms of assembly, interacts with Der.

In terms of biological role, a GTPase-activating protein (GAP) that modifies Der/EngA GTPase function. May play a role in ribosome biogenesis. This is Der GTPase-activating protein YihI from Mannheimia haemolytica (Pasteurella haemolytica).